The sequence spans 206 residues: Adenylate kinase (206 aa).

10 to 15 (GAGKGT) contacts ATP. The NMP stretch occupies residues 30–59 (STGDMLRAAVAAGTPVGLKAKDIMASGGLV). Residues Thr-31, Arg-36, 57 to 59 (GLV), 85 to 88 (GFPR), and Gln-92 contribute to the AMP site. Residues 126–142 (NRVAETTARGEQVRADD) are LID. Residue Arg-127 coordinates ATP. AMP-binding residues include Arg-139 and Arg-150. Met-178 contributes to the ATP binding site.

This sequence belongs to the adenylate kinase family. In terms of assembly, monomer.

Its subcellular location is the cytoplasm. The catalysed reaction is AMP + ATP = 2 ADP. Its pathway is purine metabolism; AMP biosynthesis via salvage pathway; AMP from ADP: step 1/1. Its function is as follows. Catalyzes the reversible transfer of the terminal phosphate group between ATP and AMP. Plays an important role in cellular energy homeostasis and in adenine nucleotide metabolism. The protein is Adenylate kinase of Nitrobacter winogradskyi (strain ATCC 25391 / DSM 10237 / CIP 104748 / NCIMB 11846 / Nb-255).